The following is a 379-amino-acid chain: Forkhead box protein E1 (379 aa).

Residues 1 to 11 show a composition bias toward polar residues; it reads MTAESQQSPTR. The segment at 1–65 is disordered; the sequence is MTAESQQSPT…RRRKRPLQKG (65 aa). The segment covering 54–63 has biased composition (basic residues); it reads KGRRRKRPLQ. The segment at residues 66-160 is a DNA-binding region (fork-head); that stretch reads KPPYSYIALI…DSGSFLRRRK (95 aa). The segment at 239–265 is disordered; the sequence is HSGSEHAQPPNRSISPEVNSTSSSSCN. The segment covering 251-265 has biased composition (low complexity); sequence SISPEVNSTSSSSCN.

First expressed at late neural tube and early tailbud stages in the hypophyseal placode. Expression continues in the developing pituitary at late tailbud stages. As development progresses, expressed in the mesoderm of the branchial arches. At stage 38, expressed in the developing thyroid and in the pharyngeal endoderm.

The protein resides in the nucleus. Its function is as follows. Transcription factor that binds consensus sites on a variety of gene promoters and activate their transcription. This is Forkhead box protein E1 from Xenopus laevis (African clawed frog).